The sequence spans 58 residues: Small ribosomal subunit protein bS21 (58 aa).

Residues 37–58 (FYEKPSVKRKRKSEAARKRKKF) are disordered. The span at 43–58 (VKRKRKSEAARKRKKF) shows a compositional bias: basic residues.

Belongs to the bacterial ribosomal protein bS21 family.

The sequence is that of Small ribosomal subunit protein bS21 from Streptococcus sanguinis (strain SK36).